We begin with the raw amino-acid sequence, 495 residues long: MATFKDACFHYRRLTALNRRLCNIGANSICMPVPDEKIKGWCLECCQIADLTHCYGCSLPHVCKWCVQNRRCFLDNEPHLLKLRTVKHPITKDKLQCIIDLYNIIFPINDKVIRKFERMIKQRKCRNQYKIEWYNHLLLPITLNAAAFKFDENNLYYVFGLYEKSVSDIYAPYRIVNFINEFDKLLLDDINFTRMSNLPIELRTIMQEYFQLSRLPSSKLKQIYFSDFTKETVIFNTYTKTPGRSIYRNVTEFNWRDELELYSDLKNDKNKLIAAMMTSKYTRFYAHDNNFGRLKMTIFELGHHCQPNYVASNHPGNASDIQYCKWCNIKYFLSKIDWRIRDMYNLLMEFIKDCYKSNVNVGHCSSVENIYPLIKRLIWSLFTNHMDQTIEEVFNHMSPVSVEGTNVIMLILGLNISLYNEIKRTLNVDSIPMVLNLNEFSSIVKSISSKWYNVDELDKLPMSIKSTEELIEMKNSGTLTEEFELLISNSEDDNE.

An RNA-binding region spans residues 1-81 (MATFKDACFH…CFLDNEPHLL (81 aa)). The tract at residues 42 to 79 (CLECCQIADLTHCYGCSLPHVCKWCVQNRRCFLDNEPH) is zinc-binding domain. Residues 82–177 (KLRTVKHPIT…DIYAPYRIVN (96 aa)) form an important for cytoskeleton localization region. An interaction with host IRF3 region spans residues 320–495 (DIQYCKWCNI…LISNSEDDNE (176 aa)). The short motif at 485–488 (LLIS) is the pLxIS motif element.

Belongs to the rotavirus NSP1 family. In terms of assembly, interacts (via C-terminus) with host IRF3; this interaction leads to IRF3 degradation. Interacts with host IRF7; this interaction leads to IRF7 degradation. Interacts with host CUL1 and CUL3.

It localises to the host cytoplasm. It is found in the host cytoskeleton. Its function is as follows. Plays a role in the inhibition of host innate immunity by inducing the degradation of key host factors required to activate interferon production such as IRF3, IRF5 or IRF7. Associates with components of cullin RING ligases (CRLs) including CUL1 or CUL3, which are essential multisubunit ubiquitination complexes, to modulate their activities. This chain is Non-structural protein 1, found in Macaca mulatta (Rhesus macaque).